The chain runs to 488 residues: TOX high mobility group box family member 2 (488 aa).

Residues 76-114 are required for transcriptional activation; it reads YEIPPITPPNLPEPSLLHLGDHEASYHSLCHGLTPNGLL. 3 disordered regions span residues 192 to 258, 293 to 328, and 363 to 473; these read RSSI…PQKP, WDSL…KQPM, and SLLP…ECGI. The span at 204 to 216 shows a compositional bias: low complexity; sequence GSKSATPSPSSST. A compositionally biased stretch (basic and acidic residues) spans 222 to 239; that stretch reads EVHFKISGEKRPSADPGK. The short motif at 223 to 252 is the Nuclear localization signal element; it reads VHFKISGEKRPSADPGKKAKNPKKKKKKDP. Residues 240–250 show a composition bias toward basic residues; the sequence is KAKNPKKKKKK. The HMG box DNA-binding region spans 255 to 323; it reads PQKPVSAYAL…QANPPAKMLP (69 aa). A compositionally biased stretch (polar residues) spans 302 to 316; the sequence is QSSPDQGETKSTQAN. A compositionally biased stretch (low complexity) spans 443 to 460; the sequence is PSSSGSCSPGPSNPTSSG.

It localises to the nucleus. Its function is as follows. Putative transcriptional activator involved in the hypothalamo-pituitary-gonadal system. The polypeptide is TOX high mobility group box family member 2 (TOX2) (Homo sapiens (Human)).